A 216-amino-acid chain; its full sequence is Talanin (216 aa).

Isoform 4 is expressed in placenta, lung, kidney and pancreas.

In terms of biological role, may play a role in uric acid excretion. This is Talanin (ZNF365) from Homo sapiens (Human).